Reading from the N-terminus, the 154-residue chain is Mitochondrial fission 1 protein (154 aa).

Residues 1–124 (MEDLLNEVVP…KEIDKEVAKG (124 aa)) are Cytoplasmic-facing. A helical transmembrane segment spans residues 125 to 145 (MVVAGGAALVLGGILGLGIAM). Residues 146–154 (ARNKQKREK) are Mitochondrial intermembrane-facing.

The protein belongs to the FIS1 family.

The protein localises to the mitochondrion outer membrane. Functionally, involved in the fragmentation of the mitochondrial network and its perinuclear clustering. Functions downstream of Pink1 and upstream of Drp1 to regulate mitochondrial fission. In Drosophila melanogaster (Fruit fly), this protein is Mitochondrial fission 1 protein.